We begin with the raw amino-acid sequence, 82 residues long: Small ribosomal subunit protein bS16 (82 aa).

The protein belongs to the bacterial ribosomal protein bS16 family.

This is Small ribosomal subunit protein bS16 from Alcanivorax borkumensis (strain ATCC 700651 / DSM 11573 / NCIMB 13689 / SK2).